Consider the following 333-residue polypeptide: Holliday junction branch migration complex subunit RuvB (333 aa).

The tract at residues 1–182 (MTNRILDMEQ…FGITGHMEYY (182 aa)) is large ATPase domain (RuvB-L). ATP is bound by residues leucine 21, arginine 22, glycine 63, lysine 66, threonine 67, threonine 68, 129–131 (EDF), arginine 172, tyrosine 182, and arginine 219. Residue threonine 67 coordinates Mg(2+). The segment at 183–253 (ELADLTEIVE…ITDKALTMLD (71 aa)) is small ATPAse domain (RuvB-S). The head domain (RuvB-H) stretch occupies residues 256–333 (REGLDYVDQK…EHLGYPYTEK (78 aa)). DNA-binding residues include arginine 292, arginine 311, arginine 313, and arginine 316.

Belongs to the RuvB family. Homohexamer. Forms an RuvA(8)-RuvB(12)-Holliday junction (HJ) complex. HJ DNA is sandwiched between 2 RuvA tetramers; dsDNA enters through RuvA and exits via RuvB. An RuvB hexamer assembles on each DNA strand where it exits the tetramer. Each RuvB hexamer is contacted by two RuvA subunits (via domain III) on 2 adjacent RuvB subunits; this complex drives branch migration. In the full resolvosome a probable DNA-RuvA(4)-RuvB(12)-RuvC(2) complex forms which resolves the HJ.

It localises to the cytoplasm. It carries out the reaction ATP + H2O = ADP + phosphate + H(+). Its function is as follows. The RuvA-RuvB-RuvC complex processes Holliday junction (HJ) DNA during genetic recombination and DNA repair, while the RuvA-RuvB complex plays an important role in the rescue of blocked DNA replication forks via replication fork reversal (RFR). RuvA specifically binds to HJ cruciform DNA, conferring on it an open structure. The RuvB hexamer acts as an ATP-dependent pump, pulling dsDNA into and through the RuvAB complex. RuvB forms 2 homohexamers on either side of HJ DNA bound by 1 or 2 RuvA tetramers; 4 subunits per hexamer contact DNA at a time. Coordinated motions by a converter formed by DNA-disengaged RuvB subunits stimulates ATP hydrolysis and nucleotide exchange. Immobilization of the converter enables RuvB to convert the ATP-contained energy into a lever motion, pulling 2 nucleotides of DNA out of the RuvA tetramer per ATP hydrolyzed, thus driving DNA branch migration. The RuvB motors rotate together with the DNA substrate, which together with the progressing nucleotide cycle form the mechanistic basis for DNA recombination by continuous HJ branch migration. Branch migration allows RuvC to scan DNA until it finds its consensus sequence, where it cleaves and resolves cruciform DNA. In Streptococcus suis (strain 98HAH33), this protein is Holliday junction branch migration complex subunit RuvB.